Consider the following 95-residue polypeptide: Small ubiquitin-related modifier 2 (95 aa).

Residue M1 forms a Peptide (Met-Gly) (interchain with G-Cter in ubiquitin) linkage. Residues K5 and K7 each participate in a glycyl lysine isopeptide (Lys-Gly) (interchain with G-Cter in SUMO2) cross-link. Residue K11 is modified to N6-acetyllysine; alternate. K11 participates in a covalent cross-link: Glycyl lysine isopeptide (Lys-Gly) (interchain with G-Cter in SUMO); alternate. Residue K11 forms a Glycyl lysine isopeptide (Lys-Gly) (interchain with G-Cter in SUMO1); alternate linkage. K11 participates in a covalent cross-link: Glycyl lysine isopeptide (Lys-Gly) (interchain with G-Cter in SUMO2); alternate. A Glycyl lysine isopeptide (Lys-Gly) (interchain with G-Cter in ubiquitin); alternate cross-link involves residue K11. Residues D16–Y95 enclose the Ubiquitin-like domain. K21 participates in a covalent cross-link: Glycyl lysine isopeptide (Lys-Gly) (interchain with G-Cter in SUMO2). G93 is covalently cross-linked (Glycyl lysine isopeptide (Gly-Lys) (interchain with K-? in acceptor proteins)). A propeptide spanning residues V94–Y95 is cleaved from the precursor.

Belongs to the ubiquitin family. SUMO subfamily. As to quaternary structure, interacts with SAE2 and UBE2I. Interacts with ZNF451. Identified in a complex with ZNF451 and UBE2I/UBC9, where one ZNF451 interacts with one UBE2I/UBC9 and two SUMO2 chains, one bound to the UBE2I/UBC9 active site and the other to another region of the same UBE2I/UBC9 molecule. Covalently attached to a number of proteins. Interacts with PELP1. Interacts with USP25; the interaction sumoylates USP25. Interacts with SIMC1, CASP8AP2, RNF111 and SOBP (via SIM domains). Interacts with MTA1. Interacts with HINT1. Interacts with GCNA (via SIM domains); this interaction allows the GCNA recruitment to DPCs sites. Polymeric chains can be formed through Lys-11 cross-linking. Polymeric SUMO2 chains undergo 'Lys-6'-, 'Lys-11'-, 'Lys-48'- and 'Lys-63'-linked polyubiquitination by RNF4. In terms of processing, cleavage of precursor form by SENP1 or SENP2 is necessary for function. Post-translationally, monoubiquitinated N-terminally by UBE2W, which primes it for RNF4-dependent polyubiquitination by the UBE2V1-UBE2N heterodimer.

Its subcellular location is the nucleus. It is found in the PML body. Its function is as follows. Ubiquitin-like protein that can be covalently attached to proteins as a monomer or as a lysine-linked polymer. Covalent attachment via an isopeptide bond to its substrates requires prior activation by the E1 complex SAE1-SAE2 and linkage to the E2 enzyme UBE2I, and can be promoted by an E3 ligase such as PIAS1-4, RANBP2 or CBX4. This post-translational modification on lysine residues of proteins plays a crucial role in a number of cellular processes such as nuclear transport, DNA replication and repair, mitosis and signal transduction. Polymeric SUMO2 chains are also susceptible to polyubiquitination which functions as a signal for proteasomal degradation of modified proteins. Plays a role in the regulation of sumoylation status of SETX. This Bos taurus (Bovine) protein is Small ubiquitin-related modifier 2.